We begin with the raw amino-acid sequence, 347 residues long: UDP-N-acetylenolpyruvoylglucosamine reductase (347 aa).

One can recognise an FAD-binding PCMH-type domain in the interval 16-187 (AIEQCSHYLV…IAVGLKLPKT (172 aa)). The active site involves Arg163. Ser233 functions as the Proton donor in the catalytic mechanism. The active site involves Glu328.

It belongs to the MurB family. It depends on FAD as a cofactor.

It is found in the cytoplasm. The catalysed reaction is UDP-N-acetyl-alpha-D-muramate + NADP(+) = UDP-N-acetyl-3-O-(1-carboxyvinyl)-alpha-D-glucosamine + NADPH + H(+). The protein operates within cell wall biogenesis; peptidoglycan biosynthesis. Its function is as follows. Cell wall formation. This chain is UDP-N-acetylenolpyruvoylglucosamine reductase, found in Vibrio vulnificus (strain YJ016).